The primary structure comprises 339 residues: Mitogen-activated protein kinase kinase kinase 18 (339 aa).

Residues 3-263 enclose the Protein kinase domain; it reads WTRGKTLGRG…ASQLLNHPFL (261 aa). ATP-binding positions include 9 to 17 and Lys32; that span reads LGRGSTATV. The Proton acceptor role is filled by Asp131. Phosphoserine is present on Ser301.

It belongs to the protein kinase superfamily. Ser/Thr protein kinase family. Interacts with ABI1. Binds to MKK3. Associates with SRK2E within the nucleus. Autophosphorylated. Post-translationally, unstable protein degraded by the proteasome pathway; this degradation is promoted by ABI1, but blocked by ABA. Expressed in roots, leaves and flowers.

It is found in the nucleus. It carries out the reaction L-seryl-[protein] + ATP = O-phospho-L-seryl-[protein] + ADP + H(+). It catalyses the reaction L-threonyl-[protein] + ATP = O-phospho-L-threonyl-[protein] + ADP + H(+). With respect to regulation, kinase activity is activated by abscisic acid (ABA). Inhibited by ABI1. Activated by SRK2E. Functionally, component of the abscisic acid (ABA) signaling pathway that acts as ABA signal transducer in the context of abiotic stresses. Triggers MPK1, MPK2, MPK7 and MPK14 activation in a MKK3-dependent manner and MPK6 activation in a MKK3-independent manner. Mediates the ABA-dependent activation of the MKK3-MPK7 module. Positive regulator of ABA responses leading to the induction of gene expression (e.g. RD29B and RAB18) and involved in various responses including stomatal development, stomatal movement, inhibition of germination and root growth. Promotes leaf senescence. The polypeptide is Mitogen-activated protein kinase kinase kinase 18 (Arabidopsis thaliana (Mouse-ear cress)).